We begin with the raw amino-acid sequence, 212 residues long: tRNA (guanine-N(7)-)-methyltransferase (212 aa).

S-adenosyl-L-methionine contacts are provided by glutamate 44, aspartate 69, aspartate 96, and aspartate 118. Aspartate 118 is an active-site residue. Lysine 122 provides a ligand contact to substrate. The segment at 124–129 (RHEKRR) is interaction with RNA. Substrate is bound by residues aspartate 154 and 191-194 (TEYE).

Belongs to the class I-like SAM-binding methyltransferase superfamily. TrmB family.

The enzyme catalyses guanosine(46) in tRNA + S-adenosyl-L-methionine = N(7)-methylguanosine(46) in tRNA + S-adenosyl-L-homocysteine. It functions in the pathway tRNA modification; N(7)-methylguanine-tRNA biosynthesis. Functionally, catalyzes the formation of N(7)-methylguanine at position 46 (m7G46) in tRNA. This is tRNA (guanine-N(7)-)-methyltransferase from Streptococcus sanguinis (strain SK36).